A 158-amino-acid chain; its full sequence is Ankyrin repeat domain-containing protein 37 (158 aa).

3 ANK repeats span residues 1–25 (MLLL…SVNA), 30–59 (CKQS…DLNQ), and 63–92 (LGEA…QIDL). The Nuclear localization signal signature appears at 129–149 (EHPDRNDCVAVLRQKRSLGSV).

Post-translationally, ubiquitinated by the CRL2(FEM1B) complex, leading to its degradation. Mainly expressed in testis, small intestine, colon, blood leukocytes and in pancreatic adenocarcinoma cells.

Its subcellular location is the nucleus. The protein localises to the cytoplasm. This is Ankyrin repeat domain-containing protein 37 from Homo sapiens (Human).